A 507-amino-acid polypeptide reads, in one-letter code: MEKYENLGLVGEGSYGMVMKCRNKDSGRIVAIKKFLESDDDKMVKKIAMREIKLLKQLRHENLVNLLEVCKKKKRWYLVFEFVDHTILDDLKLFPNGLDYQVVQKYLFQIINGIGFCHSHNIIHRDIKPENILVSQSGVVKLCDFGFARTLAAPGEVYTDYVATRWYRAPELLVGDVKYGKAVDIWAIGCLVIEMLMGQPLFPGESDIDQLHHIMTCLGNLIPRHQELFYKNPVFAGVRLPEIKDIEAEPLESRYPKLPEVVISLAKKCLHIDPDKRPLCADLLHHDFFQMDGFAERFSQELQLKIEKDARNNSLPKKFQIRKKEKDDALGEERKTLVVQDTNADPKTKDSKVLKVKGSKIDVEKTEKGTRASNGSCLHDNGTSHKGLSSTSLRDCSNVTIDHPRNPGTAIPPLTHNLSAVAPGINAAMGTIPGVQNYRVDEKTKKYCNPFVKPSQPSPSGIYNMNVSASVSNCPLPRKSKHSPPLDLAVSMGARRVKLYLETESET.

In terms of domain architecture, Protein kinase spans 4-289 (YENLGLVGEG…CADLLHHDFF (286 aa)). ATP is bound by residues 10–18 (VGEGSYGMV) and lysine 33. Residues 45-51 (KKIAMRE) carry the [NKR]KIAxRE motif. The Proton acceptor role is filled by aspartate 126. The interval 365-392 (KTEKGTRASNGSCLHDNGTSHKGLSSTS) is disordered.

Belongs to the protein kinase superfamily. CMGC Ser/Thr protein kinase family. CDC2/CDKX subfamily.

The protein localises to the cytoplasm. Its subcellular location is the nucleus. It catalyses the reaction L-seryl-[protein] + ATP = O-phospho-L-seryl-[protein] + ADP + H(+). The catalysed reaction is L-threonyl-[protein] + ATP = O-phospho-L-threonyl-[protein] + ADP + H(+). This is Cyclin-dependent kinase-like 2 from Rattus norvegicus (Rat).